We begin with the raw amino-acid sequence, 146 residues long: Ecotin-like protein 1 (146 aa).

It belongs to the protease inhibitor I11 (ecotin) family.

The protein is Ecotin-like protein 1 (ISP1) of Leishmania braziliensis.